Reading from the N-terminus, the 274-residue chain is Large ribosomal subunit protein uL2cz/uL2cy (274 aa).

The tract at residues 225 to 274 (PVDHPHGGGEGRAPIGRKKPVTPWGYPALGRRSRKRKKYSDNLILRRRTK) is disordered.

It belongs to the universal ribosomal protein uL2 family. Part of the 50S ribosomal subunit.

Its subcellular location is the plastid. It localises to the chloroplast. The polypeptide is Large ribosomal subunit protein uL2cz/uL2cy (rpl2-A) (Lotus japonicus (Lotus corniculatus var. japonicus)).